The following is a 226-amino-acid chain: Deoxyribose-phosphate aldolase (226 aa).

Asp95 (proton donor/acceptor) is an active-site residue. Lys157 (schiff-base intermediate with acetaldehyde) is an active-site residue. Lys186 (proton donor/acceptor) is an active-site residue.

Belongs to the DeoC/FbaB aldolase family. DeoC type 1 subfamily.

It is found in the cytoplasm. The catalysed reaction is 2-deoxy-D-ribose 5-phosphate = D-glyceraldehyde 3-phosphate + acetaldehyde. It functions in the pathway carbohydrate degradation; 2-deoxy-D-ribose 1-phosphate degradation; D-glyceraldehyde 3-phosphate and acetaldehyde from 2-deoxy-alpha-D-ribose 1-phosphate: step 2/2. With respect to regulation, partially inhibited by acetaldehyde. After incubation for 2, 4 and 6 hours in 300 mM acetaldehyde at 25 degrees Celsius, retains approximately 61.32%, 42.33% and 34.73% of the initial 2-deoxy-D-ribose-5-phosphate (DR5P) cleavage activity, respectively. Functionally, catalyzes a reversible aldol reaction between acetaldehyde and D-glyceraldehyde 3-phosphate to generate 2-deoxy-D-ribose 5-phosphate. Its function is as follows. In vitro, DERA can catalyze the aldol condensation of chloroacetaldehyde (CHAD) and acetaldehyde (ACD), yielding (S)-4-chloro-3-hydroxybutanal ((S)-CHB), which can combine with another aldehyde to form (3R,5S)-6-chloro-2,4,6-trideoxyhexapyranose (CTeHP), a key intermediate for statin drugs. This is Deoxyribose-phosphate aldolase from Pseudomonas syringae pv. syringae (strain B728a).